The primary structure comprises 1150 residues: Solute carrier family 12 member 6 (1150 aa).

The Cytoplasmic portion of the chain corresponds to 1-135; sequence MHPPETTTKM…DEYFDKNLAL (135 aa). The segment at 20 to 66 is disordered; that stretch reads TKIDDIPGLSDTSPDLSSRSSSRVRFSSRESVPETSRSEPMSEMSGA. The segment covering 28–45 has biased composition (low complexity); it reads LSDTSPDLSSRSSSRVRF. A phosphoserine mark is found at Ser32 and Ser120. Residues 136–158 form a discontinuously helical membrane-spanning segment; it reads FEEEMDTRPKVSSLLNRMANYTN. Ser147 and Ser148 together coordinate K(+). Ser148 bears the Phosphoserine mark. Asn151 provides a ligand contact to chloride. Over 159–165 the chain is Extracellular; sequence LTQGAKE. The tract at residues 161–181 is disordered; sequence QGAKEHEEAENITEGKKKPTK. A compositionally biased stretch (basic and acidic residues) spans 163–177; it reads AKEHEEAENITEGKK. The helical transmembrane segment at 166-188 threads the bilayer; it reads HEEAENITEGKKKPTKTPQMGTF. At 189–211 the chain is on the cytoplasmic side; sequence MGVYLPCLQNIFGVILFLRLTWV. Residues 212–245 form a helical membrane-spanning segment; it reads VGTAGVLQAFAIVLICCCCTMLTAISMSAIATNG. At 246–263 the chain is on the extracellular side; the sequence is VVPAGGSYFMISRALGPE. Helical transmembrane passes span 264-287 and 288-316; these read FGGA…ILGA and IEIF…AMLN. At 317–433 the chain is on the extracellular side; it reads NMRVYGTAFL…FVHNNVTSIQ (117 aa). The cysteines at positions 375 and 390 are disulfide-linked. 4 N-linked (GlcNAc...) asparagine glycosylation sites follow: Asn379, Asn398, Asn411, and Asn428. Cys410 and Cys420 are joined by a disulfide. The chain crosses the membrane as a helical span at residues 434-454; it reads GIPGLASGIITENLWSNYLPK. Positions 443, 444, and 446 each coordinate K(+). Ile443 and Thr444 together coordinate chloride. Residues Leu447 and Trp448 each coordinate chloride. The Cytoplasmic segment spans residues 455–464; that stretch reads GEIIEKPSAK. A helical membrane pass occupies residues 465-487; that stretch reads SSDVLGSLNHEYVLVDITTSFTL. Topologically, residues 488 to 518 are extracellular; sequence LVGIFFPSVTGIMAGSNRSGDLKDAQKSIPI. A helical membrane pass occupies residues 519 to 545; that stretch reads GTILAILTTSFVYLSNVVLFGACIEGV. Residues 546–568 lie on the Cytoplasmic side of the membrane; sequence VLRDKFGDAVKGNLVVGTLSWPS. 2 consecutive transmembrane segments (helical) span residues 569 to 589 and 590 to 612; these read PWVI…QSLT and GAPR…VFGH. Ile603 serves as a coordination point for chloride. Topologically, residues 613 to 629 are cytoplasmic; sequence SKANGEPTWALLLTAAI. Transmembrane regions (helical) follow at residues 630–649 and 650–665; these read AELG…LSMF and FLMC…ALQT. The Cytoplasmic portion of the chain corresponds to 666–1150; that stretch reads LLRTPNWRPR…GGSEVITIYS (485 aa). The scissor helix stretch occupies residues 682-691; the sequence is ALSFMGMSIC. Ser736 carries the phosphoserine modification. A Phosphothreonine modification is found at Thr778. A Phosphoserine modification is found at Ser981. The residue at position 991 (Thr991) is a Phosphothreonine; by OXSR1 and STK39. 3 positions are modified to phosphoserine: Ser1023, Ser1029, and Ser1032. Position 1048 is a phosphothreonine; by OXSR1 and STK39 (Thr1048). A Phosphotyrosine modification is found at Tyr1121. An interaction with CKB region spans residues 1133 to 1150; it reads ERVLLVRGGGSEVITIYS.

The protein belongs to the SLC12A transporter family. K/Cl co-transporter subfamily. In terms of assembly, homodimer; adopts a domain-swap conformation at the scissor helices connecting the transmembrane domain and C-terminal domain. Heterodimer with K-Cl cotransporter SLC12A5. Interacts (via C-terminus) with CKB; the interaction may be required for potassium-chloride cotransport activity. Phosphorylated, phosphorylation regulates transporter activity. Phosphorylated at Thr-991 and Thr-1048 by OXSR1/OSR1 and STK39/SPAK downstream of WNK kinases (WNK1, WNK2, WNK3 or WNK4), inhibiting the potassium-chloride cotransport activity. Post-translationally, N-glycosylated. As to expression, expressed in brain (at protein level). Highly expressed in heart, brain and kidney. Detected at lower levels in skeletal muscle, placenta, lung and pancreas. Detected in umbilical vein endothelial cells. More abundant in kidney. In terms of tissue distribution, testis specific.

It is found in the cell membrane. The protein localises to the basolateral cell membrane. It catalyses the reaction K(+)(in) + chloride(in) = K(+)(out) + chloride(out). Inhibited following phosphorylation by OXSR1/OSR1 and STK39/SPAK: phosphorylation takes place downstream of WNK kinases (WNK1, WNK2, WNK3 or WNK4) in response to hyperosmotic stress and subsequent cell shrinkage. Activated by N-ethylmaleimide (NEM). Inhibited by DIOA, bumetanide and furosemide. In terms of biological role, mediates electroneutral potassium-chloride cotransport when activated by cell swelling. May contribute to cell volume homeostasis in single cells. Its function is as follows. Mediates electroneutral potassium-chloride cotransport when activated by cell swelling. May contribute to cell volume homeostasis in single cells. Mediates electroneutral potassium-chloride cotransport when activated by cell swelling. May contribute to cell volume homeostasis in single cells. In Homo sapiens (Human), this protein is Solute carrier family 12 member 6.